Reading from the N-terminus, the 137-residue chain is Small ribosomal subunit protein bS6 (137 aa).

Residues 96 to 137 (ITEASPMAKAKDERDTRRSSEERAPRAEATEEVKESAENTAE) are disordered. The segment covering 104–137 (KAKDERDTRRSSEERAPRAEATEEVKESAENTAE) has biased composition (basic and acidic residues).

Belongs to the bacterial ribosomal protein bS6 family.

In terms of biological role, binds together with bS18 to 16S ribosomal RNA. This Shewanella piezotolerans (strain WP3 / JCM 13877) protein is Small ribosomal subunit protein bS6.